The sequence spans 385 residues: 6-hydroxynicotinate 3-monooxygenase (385 aa).

The signal sequence occupies residues M1–A20. FAD is bound by residues G15, E34 to Q35, H47, R108, and L130. H47 functions as the Proton acceptor in the catalytic mechanism. The active-site Proton acceptor is the Y215. Residues D294 and A307–A308 each bind FAD.

Belongs to the 6-hydroxynicotinate 3-monooxygenase family. In terms of assembly, monomer. It depends on FAD as a cofactor.

The enzyme catalyses 6-hydroxynicotinate + NADH + O2 + 2 H(+) = 2,5-dihydroxypyridine + CO2 + NAD(+) + H2O. Inhibited competitively by nicotinic acid with a Ki of 0.49 mM. Inhibited by thiol-specific compounds p-chloromercuribenzoate, DTNB, Ag(2)SO(4), HgCl(2), CuCl(2) and N-ethylmaleimide. No inhibition by o-phenanthroline, 8-hydroxyquinoline, EDTA, disodium 4,5-dihydroxy-m-benzenedisulfonate, fluoride, azide, KCl, LiCl, NaCl, BaCl(2), MnCl(2), MgCl(2), PBCl, ZnCl(2), CoCl(2), SnCl(2), FeSO(4), FeCl(3), NiCl(2), CdCl(2), AlCl(3), iodoacetic acid, hydro-xylamine, phenylhydrazine, semicarbazide, cysteamine, alpha,alpha-dipyridyl and urea. Functionally, flavin-dependent monooxygenase (FMO) that catalyzes the decarboxylative hydroxylation of 6-hydroxynicotinic acid (6-HNA) to 2,5-dihydroxypyridine (2,5-DHP) with concomitant oxidation of NADH, a step in the aerobic nicotinate degradation pathway. Uses NADH in preference to NADPH as an electron donor. The sequence is that of 6-hydroxynicotinate 3-monooxygenase (nicC) from Pseudomonas fluorescens.